We begin with the raw amino-acid sequence, 139 residues long: Class I hydrophobin 1 (139 aa).

Positions 1–21 (MFFRISTVFVVALAAFAAASP) are cleaved as a signal peptide. Cystine bridges form between cysteine 57/cysteine 118, cysteine 64/cysteine 112, cysteine 65/cysteine 98, and cysteine 119/cysteine 132.

The protein belongs to the fungal hydrophobin family. In terms of assembly, self-assembles to form functional amyloid fibrils called rodlets. Self-assembly into fibrillar rodlets occurs spontaneously at hydrophobic:hydrophilic interfaces and the rodlets further associate laterally to form amphipathic monolayers.

It is found in the secreted. The protein localises to the cell wall. Its function is as follows. Aerial growth, conidiation, and dispersal of filamentous fungi in the environment rely upon a capability of their secreting small amphipathic proteins called hydrophobins (HPBs) with low sequence identity. Class I can self-assemble into an outermost layer of rodlet bundles on aerial cell surfaces, conferring cellular hydrophobicity that supports fungal growth, development and dispersal; whereas Class II form highly ordered films at water-air interfaces through intermolecular interactions but contribute nothing to the rodlet structure. Hah1 is a class I hydrophobin that is involved in aerial growth of mycelia, but does not play a role in pathogenesis. This Heterobasidion annosum (Root rot fungus) protein is Class I hydrophobin 1.